A 467-amino-acid polypeptide reads, in one-letter code: Retinoic acid receptor RXR-alpha (467 aa).

The disordered stretch occupies residues 1-61 (MDTKHFLPLD…LHSPISTLSS (61 aa)). Residues 1 to 139 (MDTKHFLPLD…GNMSSFTKHI (139 aa)) are modulating. K4 is covalently cross-linked (Glycyl lysine isopeptide (Lys-Gly) (interchain with G-Cter in SUMO2)). 2 positions are modified to phosphoserine: S22 and S28. Over residues 32-55 (PSLHPSLGPGLGSPLGSPGQLHSP) the composition is skewed to low complexity. Residues S61 and S75 each carry the phosphoserine; by MAPK8 and MAPK9 modification. Residues 79-109 (PHSMSVPTTPTLGFETGSPQLNSPMNPVSSS) are disordered. The span at 83-109 (SVPTTPTLGFETGSPQLNSPMNPVSSS) shows a compositional bias: polar residues. Phosphothreonine; by MAPK8 and MAPK9 is present on T87. K113 is covalently cross-linked (Glycyl lysine isopeptide (Lys-Gly) (interchain with G-Cter in SUMO)). Phosphoserine is present on S134. Residues C140 and C143 each contribute to the Zn(2+) site. The NR C4-type zinc-finger motif lies at 140–160 (CAICGDRSSGKHYGVYSCEGC). The segment at residues 140–205 (CAICGDRSSG…RYQKCLAMGM (66 aa)) is a DNA-binding region (nuclear receptor). N6-acetyllysine is present on K150. Zn(2+) is bound by residues C157 and C160. The nuclear localization signal stretch occupies residues 165–170 (KRTVRK). Residues C176, C182, C192, and C195 each coordinate Zn(2+). Residues 176–200 (CRDNKDCLIDKRQRNRCQYCRYQKC) form an NR C4-type zinc finger. Residues 206-229 (KREAVQEERQRGKDRNENEVESTS) are hinge. Residues 211–223 (QEERQRGKDRNEN) are compositionally biased toward basic and acidic residues. The tract at residues 211–233 (QEERQRGKDRNENEVESTSSANE) is disordered. The NR LBD domain occupies 232–463 (NEDMPVEKIL…TFLMEMLEAP (232 aa)). S264 is modified (phosphoserine). S265 is subject to Phosphoserine; by MAPK8 and MAPK9. Residues R321 and A332 each coordinate 9-cis-retinoate. The all-trans-retinoate site is built by R321 and A332. A required for nuclear export region spans residues 353 to 373 (RVLTELVSKMRDMQMDKTELG).

Belongs to the nuclear hormone receptor family. NR2 subfamily. In terms of assembly, homodimer. Heterodimer (via C-terminus) with RARA; required for ligand-dependent retinoic acid receptor transcriptional activity; association with RARA is enhanced by pulsatile shear stress. Heterodimer with PPARA (via the leucine-like zipper in the LBD); the interaction is required for PPARA transcriptional activity. Heterodimerizes with PPARG. Heterodimerizes (via NR LBD) with RARB. Heterodimerizes with NR1H4; the heterodimerization enhances the binding affinity for LXXLL motifs from coactivators. Interacts with NCOA3 and NCOA6 coactivators. Interacts with FAM120B. Interacts with coactivator PELP1, SENP6, SFPQ, DNTTIP2 and RNF8. Interacts with PRMT2. Interacts with ASXL1. Interacts with BHLHE40/DEC1, BHLHE41/DEC2, MED1, NCOR1 and NCOR2. Interacts in a ligand-dependent fashion with MED1 and NCOA1. Interacts with VDR. Interacts with EP300; the interaction is decreased by 9-cis retinoic acid. Heterodimer (via C-terminus) with NR4A1 (DNA-binding domain); the interaction is enhanced by 9-cis retinoic acid. NR4A1 competes with EP300 for interaction with RXRA and thereby attenuates EP300 mediated acetylation of RXRA. In the absence of hormonal ligand, interacts with TACC1. Interacts ith IGFBP3. In terms of processing, phosphorylated on serine and threonine residues mainly in the N-terminal modulating domain. Constitutively phosphorylated on Ser-22 in the presence or absence of ligand. Under stress conditions, hyperphosphorylated by activated JNK on Ser-61, Ser-75, Thr-87 and Ser-265. Phosphorylated on Ser-28, in vitro, by PKA. This phosphorylation is required for repression of cAMP-mediated transcriptional activity of RARA. Ubiquitinated by UBR5, leading to its degradation: UBR5 specifically recognizes and binds ligand-bound RXRA when it is not associated with coactivators (NCOAs). In presence of NCOAs, the UBR5-degron is not accessible, preventing its ubiquitination and degradation. Post-translationally, sumoylation negatively regulates transcriptional activity. Desumoylated specifically by SENP6. In terms of processing, acetylated by EP300; acetylation enhances DNA binding and transcriptional activity. In terms of tissue distribution, expressed in the adrenal gland with main expression in the zona fasciculata and medulla (at protein level). Expressed in aortic endothelial cells, with high expression in the descending thoracic aorta and the outer curvature of the aortic arch, where pulsatory shear stress exists, but very low in the inner curvature of the aortic arch, where oscillatory shear stress prevails (at protein level).

The protein resides in the nucleus. Its subcellular location is the cytoplasm. It localises to the mitochondrion. In terms of biological role, receptor for retinoic acid that acts as a transcription factor. Forms homo- or heterodimers with retinoic acid receptors (RARs) and binds to target response elements in response to their ligands, all-trans or 9-cis retinoic acid, to regulate gene expression in various biological processes. The RAR/RXR heterodimers bind to the retinoic acid response elements (RARE) composed of tandem 5'-AGGTCA-3' sites known as DR1-DR5 to regulate transcription. The high affinity ligand for retinoid X receptors (RXRs) is 9-cis retinoic acid. In the absence of ligand, the RXR-RAR heterodimers associate with a multiprotein complex containing transcription corepressors that induce histone deacetylation, chromatin condensation and transcriptional suppression. On ligand binding, the corepressors dissociate from the receptors and coactivators are recruited leading to transcriptional activation. Serves as a common heterodimeric partner for a number of nuclear receptors, such as RARA, RARB and PPARA. The RXRA/RARB heterodimer can act as a transcriptional repressor or transcriptional activator, depending on the RARE DNA element context. The RXRA/PPARA heterodimer is required for PPARA transcriptional activity on fatty acid oxidation genes such as ACOX1 and the P450 system genes. Together with RARA, positively regulates microRNA-10a expression, thereby inhibiting the GATA6/VCAM1 signaling response to pulsatile shear stress in vascular endothelial cells. Acts as an enhancer of RARA binding to RARE DNA element. May facilitate the nuclear import of heterodimerization partners such as VDR and NR4A1. Promotes myelin debris phagocytosis and remyelination by macrophages. Plays a role in the attenuation of the innate immune system in response to viral infections, possibly by negatively regulating the transcription of antiviral genes such as type I IFN genes. Involved in the regulation of calcium signaling by repressing ITPR2 gene expression, thereby controlling cellular senescence. This chain is Retinoic acid receptor RXR-alpha (Rxra), found in Rattus norvegicus (Rat).